A 51-amino-acid polypeptide reads, in one-letter code: Sperm protamine P1 (51 aa).

This sequence belongs to the protamine P1 family. As to expression, testis.

The protein localises to the nucleus. The protein resides in the chromosome. Functionally, protamines substitute for histones in the chromatin of sperm during the haploid phase of spermatogenesis. They compact sperm DNA into a highly condensed, stable and inactive complex. The protein is Sperm protamine P1 (PRM1) of Macaca mulatta (Rhesus macaque).